We begin with the raw amino-acid sequence, 160 residues long: Transcription elongation factor GreA (160 aa).

The stretch at 1–72 (MAEKTYPMTL…QISSLETKIR (72 aa)) forms a coiled coil.

Belongs to the GreA/GreB family.

In terms of biological role, necessary for efficient RNA polymerase transcription elongation past template-encoded arresting sites. The arresting sites in DNA have the property of trapping a certain fraction of elongating RNA polymerases that pass through, resulting in locked ternary complexes. Cleavage of the nascent transcript by cleavage factors such as GreA or GreB allows the resumption of elongation from the new 3'terminus. GreA releases sequences of 2 to 3 nucleotides. In Streptococcus pneumoniae (strain ATCC 700669 / Spain 23F-1), this protein is Transcription elongation factor GreA.